A 314-amino-acid polypeptide reads, in one-letter code: MPITLDKKLPAVDILKSENIFVMDDKRAIHQDIRPMSILILNLMPTKVATETQLLRLLANTPLQLSVDFLYMTSHHSKTTQAEHMKTFYKTFKDIKDNYYDGLIITGAPVETMPFEKVDYWEELCQVFQWSKTHVYSTLHLCWGAQAGLYYRYSVDKVQMTDKLSGIYLQKVNEQLSPLMRGFDDCFLSPHSRYTEVLLKDINNKTNLEILASGEKVGLSILASRDMREVYSFGHLEYDRETLDNEYKRDLKAGKSPKIPENYYQDDDVTTHPIMRWNLAAATFFSNWINYAVYQETPYRLEELEKDISFYGYL.

Residue C142 is the Acyl-thioester intermediate of the active site. Residues K163 and S192 each contribute to the substrate site. The active-site Proton acceptor is the H235. Residue E237 is part of the active site. R249 contacts substrate.

Belongs to the MetA family.

It is found in the cytoplasm. The enzyme catalyses L-homoserine + acetyl-CoA = O-acetyl-L-homoserine + CoA. It functions in the pathway amino-acid biosynthesis; L-methionine biosynthesis via de novo pathway; O-acetyl-L-homoserine from L-homoserine: step 1/1. Transfers an acetyl group from acetyl-CoA to L-homoserine, forming acetyl-L-homoserine. This chain is Homoserine O-acetyltransferase, found in Streptococcus mutans serotype c (strain ATCC 700610 / UA159).